Reading from the N-terminus, the 471-residue chain is ATP synthase subunit beta, chloroplastic (471 aa).

151–158 (GGAGVGKT) lines the ATP pocket.

The protein belongs to the ATPase alpha/beta chains family. As to quaternary structure, F-type ATPases have 2 components, CF(1) - the catalytic core - and CF(0) - the membrane proton channel. CF(1) has five subunits: alpha(3), beta(3), gamma(1), delta(1), epsilon(1). CF(0) has four main subunits: a(1), b(1), b'(1) and c(9-12).

Its subcellular location is the plastid. The protein localises to the chloroplast thylakoid membrane. It catalyses the reaction ATP + H2O + 4 H(+)(in) = ADP + phosphate + 5 H(+)(out). Its function is as follows. Produces ATP from ADP in the presence of a proton gradient across the membrane. The catalytic sites are hosted primarily by the beta subunits. The chain is ATP synthase subunit beta, chloroplastic from Rhodomonas salina (Cryptomonas salina).